The following is a 391-amino-acid chain: Phosphoglycerate kinase (391 aa).

Residues 21 to 23 (DLN), Arg36, 59 to 62 (HLGR), Arg113, and Arg146 contribute to the substrate site. Residues Lys197, Glu319, and 345–348 (GGDT) each bind ATP.

Belongs to the phosphoglycerate kinase family. As to quaternary structure, monomer.

It localises to the cytoplasm. It carries out the reaction (2R)-3-phosphoglycerate + ATP = (2R)-3-phospho-glyceroyl phosphate + ADP. It participates in carbohydrate degradation; glycolysis; pyruvate from D-glyceraldehyde 3-phosphate: step 2/5. In Shewanella sediminis (strain HAW-EB3), this protein is Phosphoglycerate kinase.